We begin with the raw amino-acid sequence, 437 residues long: UDP-N-acetylmuramate--L-alanine ligase (437 aa).

Glycine 108–serine 114 lines the ATP pocket.

Belongs to the MurCDEF family.

It is found in the cytoplasm. The catalysed reaction is UDP-N-acetyl-alpha-D-muramate + L-alanine + ATP = UDP-N-acetyl-alpha-D-muramoyl-L-alanine + ADP + phosphate + H(+). Its pathway is cell wall biogenesis; peptidoglycan biosynthesis. Its function is as follows. Cell wall formation. The chain is UDP-N-acetylmuramate--L-alanine ligase from Staphylococcus epidermidis (strain ATCC 12228 / FDA PCI 1200).